A 492-amino-acid chain; its full sequence is NADH-quinone oxidoreductase subunit N (492 aa).

Helical transmembrane passes span 13-33, 42-62, 79-99, 111-131, 133-153, 168-188, 211-231, 251-271, 284-304, 318-340, 344-366, 388-408, 426-446, and 463-483; these read MMTPEFIVLGTALILSLMDLF, PLAWIAFVGVAIALIATIGLI, FGKAFKLLLLAGGALSLLLAF, GEFYYLLLCALLGAMIMASSG, LITLFVGLELLSISSYILAGI, VINGGISTAITLFGMSYIFGL, YILAIAFLMMLVGLSFKISSV, FLSVVSKTAGFVIVLRLFITI, SLLFSMQDYIAFLAGATMIIG, FAYSSIAHAGYILVGFAAMSWVM, IWFYLLAYLFMNLGAFAILQRIS, AVAMGIFLLSLAGIPGTAGFI, VLAAVMIATTVVSYVYYFGIF, and PIGLAMVVVLCALGTLLFGVV.

It belongs to the complex I subunit 2 family. NDH-1 is composed of 14 different subunits. Subunits NuoA, H, J, K, L, M, N constitute the membrane sector of the complex.

The protein localises to the cell membrane. The enzyme catalyses a quinone + NADH + 5 H(+)(in) = a quinol + NAD(+) + 4 H(+)(out). Functionally, NDH-1 shuttles electrons from NADH, via FMN and iron-sulfur (Fe-S) centers, to quinones in the respiratory chain. The immediate electron acceptor for the enzyme in this species is believed to be a menaquinone. Couples the redox reaction to proton translocation (for every two electrons transferred, four hydrogen ions are translocated across the cytoplasmic membrane), and thus conserves the redox energy in a proton gradient. The polypeptide is NADH-quinone oxidoreductase subunit N (Geobacillus sp. (strain WCH70)).